The following is a 327-amino-acid chain: Plastid lipid-associated protein 1, chloroplastic (327 aa).

A chloroplast-targeting transit peptide spans 1 to 84 (MATTVPLFSQ…WGPEIGLNSS (84 aa)). The interval 56-78 (VNDEWGPDSKGRGGDVDDEWGPE) is disordered. Residues 85–107 (VAEKVAEEAIESAEETERLKRVL) adopt a coiled-coil conformation.

Belongs to the PAP/fibrillin family. As to expression, expressed in anthers, sepals seeds, fruit coats, and leaves. Very low in petals and pistils and not detected in roots.

It is found in the plastid. It localises to the chloroplast. May modulate the action of carotenoids. The sequence is that of Plastid lipid-associated protein 1, chloroplastic (PAP1) from Brassica campestris (Field mustard).